Consider the following 249-residue polypeptide: Cis-4-hydroxycyclohexanecarboxylate dehydrogenase (249 aa).

NAD(+) is bound by residues Asp38, Asp63, Val64, Asn90, Tyr156, Lys160, Ala189, and Thr191. The active-site Proton acceptor is Tyr156.

The protein belongs to the short-chain dehydrogenases/reductases (SDR) family. In terms of assembly, homotetramer.

It carries out the reaction cis-4-hydroxycyclohexane-1-carboxylate + NAD(+) = 4-oxocyclohexane-1-carboxylate + NADH + H(+). In terms of biological role, dehydrogenase involved in a cyclohexanecarboxylate (CHCA) degradation pathway. Catalyzes the NAD(+)-dependent dehydrogenation of cis-4-hydroxycyclohexanecarboxylate (cis-4-hydroxyCHCA) to form 4-oxocyclohexanecarboxylate (4-oxoCHCA). Is highly specific for the cis-4-hydroxy derivative and shows only weak activity with trans-4-hydroxyCHCA. Cannot use NADP(+). This Sinomonas cyclohexanicum (Corynebacterium cyclohexanicum) protein is Cis-4-hydroxycyclohexanecarboxylate dehydrogenase.